The following is a 61-amino-acid chain: Photosystem II reaction center protein K (61 aa).

A propeptide spanning residues 1-24 (MLNIFSLISICLNSALYSSSFFFG) is cleaved from the precursor. The chain crosses the membrane as a helical span at residues 40-60 (MPVIPVFFFLLAFVWQAAVSF).

Belongs to the PsbK family. PSII is composed of 1 copy each of membrane proteins PsbA, PsbB, PsbC, PsbD, PsbE, PsbF, PsbH, PsbI, PsbJ, PsbK, PsbL, PsbM, PsbT, PsbX, PsbY, PsbZ, Psb30/Ycf12, at least 3 peripheral proteins of the oxygen-evolving complex and a large number of cofactors. It forms dimeric complexes.

The protein localises to the plastid. Its subcellular location is the chloroplast thylakoid membrane. Its function is as follows. One of the components of the core complex of photosystem II (PSII). PSII is a light-driven water:plastoquinone oxidoreductase that uses light energy to abstract electrons from H(2)O, generating O(2) and a proton gradient subsequently used for ATP formation. It consists of a core antenna complex that captures photons, and an electron transfer chain that converts photonic excitation into a charge separation. This is Photosystem II reaction center protein K from Jasminum nudiflorum (Winter jasmine).